The chain runs to 382 residues: MKTELCLFDRTLNLQRYPKRAQELLQAWDAGDEFIIKHVEEELNLEDNKNILILNDNFGALSCWFSEKHNVTMMTDSFVSQRGTLKNLQRNQCNRVQLISSTEEMPEGFDLVIMQIPKNNRMLAWQLQQLRQSMTAECPIIAVNKAKEIHSSTLEVFEDYLGETKTSLAWKKHRLVFSNANATNPLTIAEAVCWSVDNEDIDLLNYPNVYSGERLDQGARFMLEHIPVDAELRHIIDLGCGNGVLSVKAAQLNPEARITCIDESFMAVESARRNLEVNLGKERQFQFIANNCLDGFKKHSSYLVLCNPPFHQGQAVTDHIAWQMFCDAKHILCKEGKLLVIGNRHLDYDDKLCRLFGEENVTTIASNSKFVILEAVKAEKSK.

Belongs to the methyltransferase superfamily. RlmG family.

The protein resides in the cytoplasm. It carries out the reaction guanosine(1835) in 23S rRNA + S-adenosyl-L-methionine = N(2)-methylguanosine(1835) in 23S rRNA + S-adenosyl-L-homocysteine + H(+). Functionally, specifically methylates the guanine in position 1835 (m2G1835) of 23S rRNA. In Aliivibrio salmonicida (strain LFI1238) (Vibrio salmonicida (strain LFI1238)), this protein is Ribosomal RNA large subunit methyltransferase G.